The following is a 649-amino-acid chain: UvrABC system protein B (649 aa).

The Helicase ATP-binding domain maps to 25 to 178; the sequence is EHYKDGIKEQ…EDILKELVKM (154 aa). 38 to 45 provides a ligand contact to ATP; that stretch reads GVTGSGKT. The Beta-hairpin motif lies at 91–114; sequence YYDYYQPEAYVAQTDTFIDKESAI. The region spanning 428–594 is the Helicase C-terminal domain; that stretch reads QVDDLLGEIR…SVVRKLKDKK (167 aa). In terms of domain architecture, UVR spans 614–649; sequence DEIIKELEKEMKQAAKDLNFEKAAKLRDRIMELKEE.

It belongs to the UvrB family. Forms a heterotetramer with UvrA during the search for lesions. Interacts with UvrC in an incision complex.

The protein localises to the cytoplasm. Its function is as follows. The UvrABC repair system catalyzes the recognition and processing of DNA lesions. A damage recognition complex composed of 2 UvrA and 2 UvrB subunits scans DNA for abnormalities. Upon binding of the UvrA(2)B(2) complex to a putative damaged site, the DNA wraps around one UvrB monomer. DNA wrap is dependent on ATP binding by UvrB and probably causes local melting of the DNA helix, facilitating insertion of UvrB beta-hairpin between the DNA strands. Then UvrB probes one DNA strand for the presence of a lesion. If a lesion is found the UvrA subunits dissociate and the UvrB-DNA preincision complex is formed. This complex is subsequently bound by UvrC and the second UvrB is released. If no lesion is found, the DNA wraps around the other UvrB subunit that will check the other stand for damage. In Methanosphaera stadtmanae (strain ATCC 43021 / DSM 3091 / JCM 11832 / MCB-3), this protein is UvrABC system protein B.